Reading from the N-terminus, the 178-residue chain is Large ribosomal subunit protein uL6 (178 aa).

Belongs to the universal ribosomal protein uL6 family. Part of the 50S ribosomal subunit.

In terms of biological role, this protein binds to the 23S rRNA, and is important in its secondary structure. It is located near the subunit interface in the base of the L7/L12 stalk, and near the tRNA binding site of the peptidyltransferase center. The protein is Large ribosomal subunit protein uL6 of Campylobacter lari (strain RM2100 / D67 / ATCC BAA-1060).